We begin with the raw amino-acid sequence, 719 residues long: Pesticidal crystal protein Cry1Id (719 aa).

The protein belongs to the delta endotoxin family.

Its function is as follows. Promotes colloidosmotic lysis by binding to the midgut epithelial cells of many lepidopteran larvae. Active on Plutella xylostella and on Bombyx mori. The chain is Pesticidal crystal protein Cry1Id (cry1Id) from Bacillus thuringiensis.